Consider the following 265-residue polypeptide: Putative pyruvate, phosphate dikinase regulatory protein 2 (265 aa).

150–157 is an ADP binding site; the sequence is GVSRTSKT.

Belongs to the pyruvate, phosphate/water dikinase regulatory protein family. PDRP subfamily.

It carries out the reaction N(tele)-phospho-L-histidyl/L-threonyl-[pyruvate, phosphate dikinase] + ADP = N(tele)-phospho-L-histidyl/O-phospho-L-threonyl-[pyruvate, phosphate dikinase] + AMP + H(+). The catalysed reaction is N(tele)-phospho-L-histidyl/O-phospho-L-threonyl-[pyruvate, phosphate dikinase] + phosphate + H(+) = N(tele)-phospho-L-histidyl/L-threonyl-[pyruvate, phosphate dikinase] + diphosphate. Its function is as follows. Bifunctional serine/threonine kinase and phosphorylase involved in the regulation of the pyruvate, phosphate dikinase (PPDK) by catalyzing its phosphorylation/dephosphorylation. The sequence is that of Putative pyruvate, phosphate dikinase regulatory protein 2 from Latilactobacillus sakei subsp. sakei (strain 23K) (Lactobacillus sakei subsp. sakei).